The following is a 71-amino-acid chain: RTCFITPDVKSKPCPPGQEVCYTETWCDGFCGIRGKRVELGCAATCPTPKKTGIDIQCCSTDDCNTFPLRP.

Disulfide bonds link cysteine 3–cysteine 21, cysteine 14–cysteine 42, cysteine 27–cysteine 31, cysteine 46–cysteine 58, and cysteine 59–cysteine 64.

It belongs to the three-finger toxin family. Long-chain subfamily. Type II alpha-neurotoxin sub-subfamily. In terms of tissue distribution, expressed by the venom gland.

It is found in the secreted. Binds with high affinity to muscular (alpha-1/CHRNA1) and neuronal (alpha-7/CHRNA7) nicotinic acetylcholine receptor (nAChR) and inhibits acetylcholine from binding to the receptor, thereby impairing neuromuscular and neuronal transmission. In Pseudonaja textilis (Eastern brown snake), this protein is Pseudonajatoxin b.